Reading from the N-terminus, the 298-residue chain is tRNA dimethylallyltransferase 2 (298 aa).

10–17 (GPTASGKT) is a binding site for ATP. 12–17 (TASGKT) is a substrate binding site. Positions 35–38 (DSRQ) are interaction with substrate tRNA.

It belongs to the IPP transferase family. As to quaternary structure, monomer. Requires Mg(2+) as cofactor.

It catalyses the reaction adenosine(37) in tRNA + dimethylallyl diphosphate = N(6)-dimethylallyladenosine(37) in tRNA + diphosphate. Functionally, catalyzes the transfer of a dimethylallyl group onto the adenine at position 37 in tRNAs that read codons beginning with uridine, leading to the formation of N6-(dimethylallyl)adenosine (i(6)A). This Syntrophotalea carbinolica (strain DSM 2380 / NBRC 103641 / GraBd1) (Pelobacter carbinolicus) protein is tRNA dimethylallyltransferase 2.